We begin with the raw amino-acid sequence, 72 residues long: Translation initiation factor IF-1 (72 aa).

In terms of domain architecture, S1-like spans 1-72; sequence MAKEETIQMQ…SRARITFRAK (72 aa).

Belongs to the IF-1 family. In terms of assembly, component of the 30S ribosomal translation pre-initiation complex which assembles on the 30S ribosome in the order IF-2 and IF-3, IF-1 and N-formylmethionyl-tRNA(fMet); mRNA recruitment can occur at any time during PIC assembly.

The protein localises to the cytoplasm. Its function is as follows. One of the essential components for the initiation of protein synthesis. Stabilizes the binding of IF-2 and IF-3 on the 30S subunit to which N-formylmethionyl-tRNA(fMet) subsequently binds. Helps modulate mRNA selection, yielding the 30S pre-initiation complex (PIC). Upon addition of the 50S ribosomal subunit IF-1, IF-2 and IF-3 are released leaving the mature 70S translation initiation complex. The polypeptide is Translation initiation factor IF-1 (Nitrosospira multiformis (strain ATCC 25196 / NCIMB 11849 / C 71)).